A 138-amino-acid polypeptide reads, in one-letter code: uncharacterized protein (138 aa).

Residues 74–96 (RRRSPSLPARRPPTPREDALEDY) are disordered. The span at 87–96 (TPREDALEDY) shows a compositional bias: basic and acidic residues.

This is an uncharacterized protein from Orgyia pseudotsugata (Douglas-fir tussock moth).